The primary structure comprises 497 residues: MSKETSYPKELLCADEKVVYDAIVVGAGVVGPCVATALARKGKKVLIVEREWSQPDRIVGELMQPAGVRALRSLGMVQAINNIDACSTSGYTVIYNGEKISFAYPYKADLSPPEKIPDLVFDGNDKVVDDGTISAKEFEEDEREHGVGFVHGRFLQNLRAICAAEDRVTRLQGNVISILRNDSKEVIGAKVDVPGRGKVDFKAHMTFVCDGIFSRFRKELSTTNTSKVWSSFVGLSLHHADLPTKHHGHVILGSEHMPVIAYQISSTETRILCAYNYPTLPKNVPEWLQKEVQPFIPPSLRKSFDAALESKSYKCMPNSWLPASQNNVTGLCVVGDALNMRHPLTGGGMAVGLMDVVLLVKTIGDMDFSDREEVLNELLGFHYERKAHACVINTLSIALYSLFAADSYYLKKLQKGCFEYLGRGEDWVRQPISFLSGVLPSPYLLTKVFFTVALYSVLINFRGRTPLGFLLAIYEGFAIIFTAAKVFTPFLYEQLLQ.

FAD contacts are provided by residues 29–30 (VV), 49–50 (ER), Arg57, Arg159, Val175, Asp336, and Met349. 2 consecutive transmembrane segments (helical) span residues 434-454 (FLSG…TVAL) and 467-487 (LGFL…AKVF).

The protein belongs to the squalene monooxygenase family. Requires FAD as cofactor.

It is found in the microsome membrane. The protein localises to the endoplasmic reticulum membrane. It carries out the reaction squalene + reduced [NADPH--hemoprotein reductase] + O2 = (S)-2,3-epoxysqualene + oxidized [NADPH--hemoprotein reductase] + H2O + H(+). Its pathway is terpene metabolism; lanosterol biosynthesis; lanosterol from farnesyl diphosphate: step 2/3. Its function is as follows. Catalyzes the stereospecific oxidation of squalene to (S)-2,3-epoxysqualene, and is considered to be a rate-limiting enzyme in steroid biosynthesis. In Eremothecium gossypii (strain ATCC 10895 / CBS 109.51 / FGSC 9923 / NRRL Y-1056) (Yeast), this protein is Squalene monooxygenase (ERG1).